The primary structure comprises 730 residues: Catalase-peroxidase (730 aa).

Residues 92-225 (WHSAGTYRSI…LSAVHMGLIY (134 aa)) constitute a cross-link (tryptophyl-tyrosyl-methioninium (Trp-Tyr) (with M-251)). The active-site Proton acceptor is His93. A cross-link (tryptophyl-tyrosyl-methioninium (Tyr-Met) (with W-92)) is located at residues 225–251 (YVNPEGPDGIPDPVASARDIRTTFRRM). His266 lines the heme b pocket.

This sequence belongs to the peroxidase family. Peroxidase/catalase subfamily. Homodimer or homotetramer. Heme b is required as a cofactor. In terms of processing, formation of the three residue Trp-Tyr-Met cross-link is important for the catalase, but not the peroxidase activity of the enzyme.

It localises to the cytoplasm. The enzyme catalyses H2O2 + AH2 = A + 2 H2O. It catalyses the reaction 2 H2O2 = O2 + 2 H2O. In terms of biological role, bifunctional enzyme with both catalase and broad-spectrum peroxidase activity. The chain is Catalase-peroxidase from Blumeria hordei (Barley powdery mildew).